Here is a 391-residue protein sequence, read N- to C-terminus: Salivary protein TRIO (391 aa).

Residues 1–24 form the signal peptide; it reads MCRGLSAVLILLVSLSAQLHVVVG. N-linked (GlcNAc...) asparagine glycosylation is present at asparagine 323.

As to expression, female salivary gland (at protein level). Female saliva (at protein level). Not detected in female midgut, head and carcass (at protein level). Not detected in male tissues (at protein level).

It localises to the secreted. Functionally, required for efficient probing on a mammalian host. Alters the local inflammatory response in the host skin following a mosquito bite by suppressing TNF-alpha/TNF expression. Its function is as follows. (Microbial infection) Contributes to optimal transmission of Plasmodium berghei sporozoites to mice. In terms of biological role, (Microbial infection) Contributes to optimal transmission of Plasmodium falciparum sporozoites to mammalian host. The polypeptide is Salivary protein TRIO (Anopheles gambiae (African malaria mosquito)).